The chain runs to 151 residues: Transcriptional repressor NrdR (151 aa).

A zinc finger lies at Cys3–Cys34. The ATP-cone domain occupies Leu49 to Asp139.

This sequence belongs to the NrdR family. It depends on Zn(2+) as a cofactor.

Functionally, negatively regulates transcription of bacterial ribonucleotide reductase nrd genes and operons by binding to NrdR-boxes. This is Transcriptional repressor NrdR from Desulfosudis oleivorans (strain DSM 6200 / JCM 39069 / Hxd3) (Desulfococcus oleovorans).